A 156-amino-acid chain; its full sequence is Small ribosomal subunit protein uS7 (156 aa).

Belongs to the universal ribosomal protein uS7 family. Part of the 30S ribosomal subunit. Contacts proteins S9 and S11.

Its function is as follows. One of the primary rRNA binding proteins, it binds directly to 16S rRNA where it nucleates assembly of the head domain of the 30S subunit. Is located at the subunit interface close to the decoding center, probably blocks exit of the E-site tRNA. The protein is Small ribosomal subunit protein uS7 of Herminiimonas arsenicoxydans.